A 95-amino-acid chain; its full sequence is MNPKHWGRAVWTIIFIVLSQAGLDGNIEACKRKLYTIVSTLPCPACRRHATIAIEDNNVMSSDDLNYIYYFFIRLFNNLASDPKYAIDVTKVNPL.

Over 1–8 the chain is Intravirion; it reads MNPKHWGR. One can recognise an ERV/ALR sulfhydryl oxidase domain in the interval 1–95; that stretch reads MNPKHWGRAV…AIDVTKVNPL (95 aa). Residues 9–25 form a helical membrane-spanning segment; sequence AVWTIIFIVLSQAGLDG. Topologically, residues 26–95 are virion surface; that stretch reads NIEACKRKLY…AIDVTKVNPL (70 aa). The cysteines at positions 43 and 46 are disulfide-linked.

The protein belongs to the orthopoxvirus OPG072 family. In terms of assembly, interacts with OPG128/A2.5; this interaction involves formation of a transient disulfide-bonded intermediate, allowing disulfide bond transfer. FAD serves as cofactor.

The protein localises to the virion membrane. Its subcellular location is the host cytoplasm. It carries out the reaction 2 R'C(R)SH + O2 = R'C(R)S-S(R)CR' + H2O2. Functionally, FAD-dependent sulfhydryl oxidase that catalyzes disulfide bond formation. The complete pathway for formation of disulfide bonds in intracellular virion membrane proteins sequentially involves thiol-disulfide transfer between OPG072/E10, OPG128/A2.5 and OPG088/G4. The protein is Probable FAD-linked sulfhydryl oxidase OPG072 (OPG072) of Bos taurus (Bovine).